The following is a 378-amino-acid chain: Quinolinate synthase (378 aa).

Residues His-59 and Ser-80 each coordinate iminosuccinate. Residue Cys-125 coordinates [4Fe-4S] cluster. Residues 151–153 (YAN) and Ser-168 contribute to the iminosuccinate site. Position 212 (Cys-212) interacts with [4Fe-4S] cluster. Residues 238-240 (HPE) and Thr-255 contribute to the iminosuccinate site. Cys-309 lines the [4Fe-4S] cluster pocket.

This sequence belongs to the quinolinate synthase family. Type 1 subfamily. [4Fe-4S] cluster serves as cofactor.

The protein resides in the cytoplasm. It catalyses the reaction iminosuccinate + dihydroxyacetone phosphate = quinolinate + phosphate + 2 H2O + H(+). It functions in the pathway cofactor biosynthesis; NAD(+) biosynthesis; quinolinate from iminoaspartate: step 1/1. Catalyzes the condensation of iminoaspartate with dihydroxyacetone phosphate to form quinolinate. This Burkholderia pseudomallei (strain 668) protein is Quinolinate synthase.